A 179-amino-acid polypeptide reads, in one-letter code: Large ribosomal subunit protein uL5 (179 aa).

The protein belongs to the universal ribosomal protein uL5 family. As to quaternary structure, part of the 50S ribosomal subunit; part of the 5S rRNA/L5/L18/L25 subcomplex. Contacts the 5S rRNA and the P site tRNA. Forms a bridge to the 30S subunit in the 70S ribosome.

Its function is as follows. This is one of the proteins that bind and probably mediate the attachment of the 5S RNA into the large ribosomal subunit, where it forms part of the central protuberance. In the 70S ribosome it contacts protein S13 of the 30S subunit (bridge B1b), connecting the 2 subunits; this bridge is implicated in subunit movement. Contacts the P site tRNA; the 5S rRNA and some of its associated proteins might help stabilize positioning of ribosome-bound tRNAs. This chain is Large ribosomal subunit protein uL5, found in Bacillus cereus (strain Q1).